The following is a 126-amino-acid chain: Small ribosomal subunit protein uS12 (126 aa).

The tract at residues Met-1 to Ala-23 is disordered. At Asp-89 the chain carries 3-methylthioaspartic acid.

This sequence belongs to the universal ribosomal protein uS12 family. As to quaternary structure, part of the 30S ribosomal subunit. Contacts proteins S8 and S17. May interact with IF1 in the 30S initiation complex.

In terms of biological role, with S4 and S5 plays an important role in translational accuracy. Functionally, interacts with and stabilizes bases of the 16S rRNA that are involved in tRNA selection in the A site and with the mRNA backbone. Located at the interface of the 30S and 50S subunits, it traverses the body of the 30S subunit contacting proteins on the other side and probably holding the rRNA structure together. The combined cluster of proteins S8, S12 and S17 appears to hold together the shoulder and platform of the 30S subunit. This is Small ribosomal subunit protein uS12 from Clostridium perfringens (strain ATCC 13124 / DSM 756 / JCM 1290 / NCIMB 6125 / NCTC 8237 / Type A).